A 528-amino-acid chain; its full sequence is Chaperonin GroEL, chloroplastic (528 aa).

ATP is bound by residues 29 to 32 (TLGP), 86 to 90 (DGTTT), glycine 414, and aspartate 496.

Belongs to the chaperonin (HSP60) family. Forms a cylinder of 14 subunits composed of two heptameric rings stacked back-to-back. Interacts with the co-chaperonin GroES.

The protein resides in the plastid. It is found in the chloroplast. It carries out the reaction ATP + H2O + a folded polypeptide = ADP + phosphate + an unfolded polypeptide.. Together with its co-chaperonin GroES, plays an essential role in assisting protein folding. The GroEL-GroES system forms a nano-cage that allows encapsulation of the non-native substrate proteins and provides a physical environment optimized to promote and accelerate protein folding. This is Chaperonin GroEL, chloroplastic from Gracilaria tenuistipitata var. liui (Red alga).